The sequence spans 1177 residues: Transcription-repair-coupling factor (1177 aa).

One can recognise a Helicase ATP-binding domain in the interval aspartate 638–isoleucine 799. An ATP-binding site is contributed by glycine 651–threonine 658. The DEEQ box signature appears at aspartate 752 to glutamine 755. Residues leucine 820–threonine 974 form the Helicase C-terminal domain.

This sequence in the N-terminal section; belongs to the UvrB family. It in the C-terminal section; belongs to the helicase family. RecG subfamily.

It is found in the cytoplasm. In terms of biological role, couples transcription and DNA repair by recognizing RNA polymerase (RNAP) stalled at DNA lesions. Mediates ATP-dependent release of RNAP and its truncated transcript from the DNA, and recruitment of nucleotide excision repair machinery to the damaged site. Probably required to repair non-bulky DNA lesions. The sequence is that of Transcription-repair-coupling factor from Bacillus subtilis (strain 168).